Reading from the N-terminus, the 786-residue chain is Ribosome biogenesis protein BOP1 homolog (786 aa).

Residues 1-11 (MAKKSAIKRKV) show a composition bias toward basic residues. A disordered region spans residues 1 to 161 (MAKKSAIKRK…NSDTSDEEDI (161 aa)). A compositionally biased stretch (polar residues) spans 17 to 26 (INEQASVSEQ). Acidic residues-rich tracts occupy residues 44 to 53 (EDTTDDEGID), 60 to 72 (TSDDLLFESDEEG), and 82 to 114 (SGEDEQGEEDDNDDEEEEDEDEEESGSSDDDAK). The segment covering 122–135 (KATLSKTTGDSSNI) has biased composition (polar residues). The segment covering 141 to 150 (PRRDPSKPEY) has biased composition (basic and acidic residues). Positions 151 to 160 (ENSDTSDEED) are enriched in acidic residues. WD repeat units lie at residues 447–488 (GHTD…RTIE), 490–528 (NDVVRCVAWCPNAKLSIIAVATGTRLLLINPKVGDKLLV), 572–614 (THFK…SQIP), 617–655 (KSKGLIQCVLFHPVKPCFFVATQHNIRIYDLVKQELIKK), 658–697 (TNSKWISGMSIHPKGDNLLVSTYDKKMLWFDLDLSTKPYQ), 701–740 (LHRNAVRSIAFHLRYPLFASGSDDQAVIVSHGMVYNDLLQ), and 756–786 (RDEFGVLDVNWHPVQPWIFSTGADCTIRLYT).

This sequence belongs to the WD repeat BOP1/ERB1 family.

The protein resides in the nucleus. The protein localises to the nucleolus. Its subcellular location is the nucleoplasm. Required for maturation of ribosomal RNAs and formation of the large ribosomal subunit. The polypeptide is Ribosome biogenesis protein BOP1 homolog (Drosophila grimshawi (Hawaiian fruit fly)).